Here is a 317-residue protein sequence, read N- to C-terminus: Putative methyltransferase YMR310C (317 aa).

The residue at position 190 (Ser190) is a Phosphoserine.

It belongs to the class IV-like SAM-binding methyltransferase superfamily.

Its subcellular location is the nucleus. This chain is Putative methyltransferase YMR310C, found in Saccharomyces cerevisiae (strain ATCC 204508 / S288c) (Baker's yeast).